A 128-amino-acid polypeptide reads, in one-letter code: MRYAIMVTGPAYGTQQASSALQFAHALLNEGHELASVFFYREGVYNANLLTSPASDEYDLVRAWQKLNTQHGVALNICVAAALRRGIIDETEAGRLALPSANLQPGFTLSGLGALAEASLTCDRVVQF.

Cys78 serves as the catalytic Cysteine persulfide intermediate.

The protein belongs to the DsrE/TusD family. In terms of assembly, heterohexamer, formed by a dimer of trimers. The hexameric TusBCD complex contains 2 copies each of TusB, TusC and TusD. The TusBCD complex interacts with TusE.

It localises to the cytoplasm. Functionally, part of a sulfur-relay system required for 2-thiolation of 5-methylaminomethyl-2-thiouridine (mnm(5)s(2)U) at tRNA wobble positions. Accepts sulfur from TusA and transfers it in turn to TusE. In Salmonella agona (strain SL483), this protein is Sulfurtransferase TusD.